A 406-amino-acid polypeptide reads, in one-letter code: Fosmidomycin resistance protein (406 aa).

Residues 1-42 (MAMSEQPQPVAGAAASTTKARTSFGILGAISLSHLLNDMIQS) are Periplasmic-facing. Transmembrane regions (helical) follow at residues 43-63 (LILA…MQIG) and 64-84 (MITL…GYWT). Topologically, residues 85–102 (DKYPMPWSLPIGMCFTLS) are periplasmic. A helical membrane pass occupies residues 103–123 (GLVLLALAGSFGAVLLAAALV). The Cytoplasmic portion of the chain corresponds to 124 to 151 (GTGSSVFHPESSRVARMASGGRHGLAQS). A helical transmembrane segment spans residues 152 to 172 (IFQVGGNFGSSLGPLLAAVII). Residues 173–177 (APYGK) lie on the Periplasmic side of the membrane. The chain crosses the membrane as a helical span at residues 178-198 (GNVAWFVLAALLAIVVLAQIS). The Cytoplasmic segment spans residues 199-225 (RWYSAQHRMNKGKPKATIINPLPRNKV). Residues 226–246 (VLAVSILLILIFSKYFYMASI) traverse the membrane as a helical segment. Residues 247-266 (SSYYTFYLMQKFGLSIQNAQ) lie on the Periplasmic side of the membrane. The helical transmembrane segment at 267–287 (LHLFAFLFAVAAGTVIGGPVG) threads the bilayer. Residues 288–294 (DKIGRKY) lie on the Cytoplasmic side of the membrane. Residues 295–315 (VIWGSILGVAPFTLILPYASL) traverse the membrane as a helical segment. At 316 to 319 (HWTG) the chain is on the periplasmic side. A helical transmembrane segment spans residues 320-340 (VLTVIIGFILASAFSAILVYA). The Cytoplasmic portion of the chain corresponds to 341 to 353 (QELLPGRIGMVSG). Residues 354-374 (LFFGFAFGMGGLGAAVLGLIA) traverse the membrane as a helical segment. Over 375–378 (DHTS) the chain is Periplasmic. Residues 379–399 (IELVYKICAFLPLLGMLTIFL) form a helical membrane-spanning segment. Residues 400–406 (PDNRHKD) are Cytoplasmic-facing.

Belongs to the major facilitator superfamily.

It is found in the cell inner membrane. Its function is as follows. Confers the resistance against fosmidomycin. The sequence is that of Fosmidomycin resistance protein (fsr) from Escherichia coli (strain K12).